A 183-amino-acid polypeptide reads, in one-letter code: Adenine phosphoribosyltransferase (183 aa).

Belongs to the purine/pyrimidine phosphoribosyltransferase family. In terms of assembly, homodimer.

It localises to the cytoplasm. The catalysed reaction is AMP + diphosphate = 5-phospho-alpha-D-ribose 1-diphosphate + adenine. It participates in purine metabolism; AMP biosynthesis via salvage pathway; AMP from adenine: step 1/1. In terms of biological role, catalyzes a salvage reaction resulting in the formation of AMP, that is energically less costly than de novo synthesis. This is Adenine phosphoribosyltransferase from Corynebacterium kroppenstedtii (strain DSM 44385 / JCM 11950 / CIP 105744 / CCUG 35717).